The sequence spans 429 residues: Guanine nucleotide-binding protein subunit alpha (429 aa).

The N-myristoyl glycine moiety is linked to residue G2. A lipid anchor (S-palmitoyl cysteine) is attached at C3. In terms of domain architecture, G-alpha spans 40–429; it reads KGVKLLLLGA…QQNLKKSGIM (390 aa). The G1 motif stretch occupies residues 43-56; the sequence is KLLLLGAGESGKST. 6 residues coordinate GTP: E51, S52, G53, K54, S55, and T56. Mg(2+) is bound at residue S55. The tract at residues 125 to 197 is not present in other G-proteins; it reads LKQIDADVAG…KDSEQFTRLS (73 aa). A G2 motif region spans residues 249–257; the sequence is DILKGRIKT. Positions 251, 257, 279, 345, 346, 348, and 401 each coordinate GTP. T257 is a binding site for Mg(2+). The interval 272 to 281 is G3 motif; sequence FKVLDAGGQR. Residues 341–348 form a G4 motif region; it reads ILFLNKID. A G5 motif region spans residues 399–404; sequence TCATDS.

Belongs to the G-alpha family. G(q) subfamily. In terms of assembly, g proteins are composed of 3 units; alpha, beta and gamma. The alpha chain contains the guanine nucleotide binding site. It depends on Mg(2+) as a cofactor.

Its function is as follows. Guanine nucleotide-binding proteins (G proteins) are involved as modulators or transducers in various transmembrane signaling systems. Involved in the mating pathway. The chain is Guanine nucleotide-binding protein subunit alpha (CAG1) from Candida albicans (strain WO-1) (Yeast).